The chain runs to 188 residues: Peptidyl-tRNA hydrolase (188 aa).

A tRNA-binding site is contributed by Y14. Residue H19 is the Proton acceptor of the active site. Residues F64, N66, and N112 each contribute to the tRNA site.

This sequence belongs to the PTH family. Monomer.

The protein resides in the cytoplasm. It catalyses the reaction an N-acyl-L-alpha-aminoacyl-tRNA + H2O = an N-acyl-L-amino acid + a tRNA + H(+). In terms of biological role, hydrolyzes ribosome-free peptidyl-tRNAs (with 1 or more amino acids incorporated), which drop off the ribosome during protein synthesis, or as a result of ribosome stalling. Functionally, catalyzes the release of premature peptidyl moieties from peptidyl-tRNA molecules trapped in stalled 50S ribosomal subunits, and thus maintains levels of free tRNAs and 50S ribosomes. This Enterococcus faecalis (strain ATCC 700802 / V583) protein is Peptidyl-tRNA hydrolase.